Consider the following 558-residue polypeptide: SPATS2-like protein (558 aa).

Ala2 bears the N-acetylalanine mark. Residues 63–79 show a composition bias toward basic residues; that stretch reads GKKKNNKRKRSKSKQHQ. Disordered regions lie at residues 63-148 and 161-202; these read GKKK…RGIT and DGNP…SNAP. 2 stretches are compositionally biased toward basic and acidic residues: residues 80-92 and 110-142; these read GNKD…ERPE and GCEK…EPPR. Ser120 bears the Phosphoserine mark. Residues 279–344 adopt a coiled-coil conformation; sequence KEEAMDILTA…ARFSCDIEQL (66 aa). Positions 383-514 are disordered; it reads KQGNFSRKSS…SEKARRRQHA (132 aa). Polar residues predominate over residues 416 to 433; it reads DACQQTMPTNKQQNGPSN. At Ser455 the chain carries Phosphoserine. The segment covering 469–485 has biased composition (basic residues); that stretch reads HEHRRQPHNGFRPKNKG.

Belongs to the SPATS2 family.

The protein resides in the cytoplasm. It is found in the nucleus. Its subcellular location is the nucleolus. This Rattus norvegicus (Rat) protein is SPATS2-like protein (Spats2l).